The sequence spans 198 residues: Outer-membrane lipoprotein carrier protein (198 aa).

A signal peptide spans 1–16; it reads MKKWLVVFFLSASALA.

Belongs to the LolA family. As to quaternary structure, monomer.

It localises to the periplasm. Its function is as follows. Participates in the translocation of lipoproteins from the inner membrane to the outer membrane. Only forms a complex with a lipoprotein if the residue after the N-terminal Cys is not an aspartate (The Asp acts as a targeting signal to indicate that the lipoprotein should stay in the inner membrane). The protein is Outer-membrane lipoprotein carrier protein of Vibrio vulnificus (strain YJ016).